We begin with the raw amino-acid sequence, 214 residues long: Osteoclast-stimulating factor 1 (214 aa).

Serine 2 bears the N-acetylserine mark. The SH3 domain occupies 12–71; that stretch reads GQVKVFRALYTFEPRTPDELYFEEGDIIYITDMSDTSWWKGTCKGRTGLIPSNYVAEQAE. 3 ANK repeats span residues 72 to 101, 105 to 135, and 139 to 168; these read SIDN…GVNG, AGST…ELNQ, and LGDT…RTDL. Threonine 200 is modified (phosphothreonine). Phosphoserine is present on residues serine 202 and serine 213.

In terms of assembly, interacts with SRC and SMN1. Interacts with FASLG.

It is found in the cytoplasm. Its function is as follows. Induces bone resorption, acting probably through a signaling cascade which results in the secretion of factor(s) enhancing osteoclast formation and activity. The sequence is that of Osteoclast-stimulating factor 1 (Ostf1) from Rattus norvegicus (Rat).